Here is a 1456-residue protein sequence, read N- to C-terminus: ABC transporter G family member 44 (1456 aa).

The ABC transporter 1 domain occupies 169–442 (ANLLHVVPNK…FESMGFKCPD (274 aa)). 202–209 (GPPGSGKT) is a binding site for ATP. One can recognise an ABC transmembrane type-2 1 domain in the interval 520–733 (ELLRTCIARE…AMNAIAVNEF (214 aa)). Transmembrane regions (helical) follow at residues 538-558 (FVYR…MTLF), 571-591 (GIVY…NGFS), 626-646 (IPIS…VIGF), 658-678 (LLLL…AALG), 682-702 (VVAN…SGFI), and 768-788 (IGVG…TIAL). Residues 812–844 (NITGETINDPRNSASSGQTTNTRRNAAPGEASE) are disordered. Residues 814–835 (TGETINDPRNSASSGQTTNTRR) show a composition bias toward polar residues. In terms of domain architecture, ABC transporter 2 spans 858–1110 (VAFNNIRYSV…DLIEYFEGVE (253 aa)). 903-910 (GVSGAGKT) is a binding site for ATP. Positions 1183–1397 (TQCMACLWKQ…TLYGLVASQF (215 aa)) constitute an ABC transmembrane type-2 2 domain. Helical transmembrane passes span 1202-1222 (YTVV…TIFW), 1242-1262 (YAAV…VVAV), 1290-1310 (LPYV…MIGF), 1317-1337 (FFWY…YGML), 1347-1367 (IASI…GFVI), 1378-1398 (WYSW…SQFG), and 1425-1445 (FLGV…VSFS).

Belongs to the ABC transporter superfamily. ABCG family. PDR (TC 3.A.1.205) subfamily.

The protein localises to the membrane. Its function is as follows. May be a general defense protein. The sequence is that of ABC transporter G family member 44 from Oryza sativa subsp. japonica (Rice).